The sequence spans 358 residues: Alanine racemase (358 aa).

The active-site Proton acceptor; specific for D-alanine is lysine 35. Lysine 35 is subject to N6-(pyridoxal phosphate)lysine. Position 130 (arginine 130) interacts with substrate. The Proton acceptor; specific for L-alanine role is filled by tyrosine 255. Methionine 303 is a substrate binding site.

This sequence belongs to the alanine racemase family. Pyridoxal 5'-phosphate serves as cofactor.

The enzyme catalyses L-alanine = D-alanine. It functions in the pathway amino-acid biosynthesis; D-alanine biosynthesis; D-alanine from L-alanine: step 1/1. In terms of biological role, catalyzes the interconversion of L-alanine and D-alanine. May also act on other amino acids. In Shewanella sediminis (strain HAW-EB3), this protein is Alanine racemase (alr).